The sequence spans 116 residues: Large ribosomal subunit protein bL17 (116 aa).

The protein belongs to the bacterial ribosomal protein bL17 family. In terms of assembly, part of the 50S ribosomal subunit. Contacts protein L32.

This Trichormus variabilis (strain ATCC 29413 / PCC 7937) (Anabaena variabilis) protein is Large ribosomal subunit protein bL17.